The chain runs to 333 residues: 1D-myo-inositol 2-acetamido-2-deoxy-alpha-D-glucopyranoside deacetylase (333 aa).

The Zn(2+) site is built by H18, D21, and H165.

Belongs to the MshB deacetylase family. Zn(2+) is required as a cofactor.

The catalysed reaction is 1D-myo-inositol 2-acetamido-2-deoxy-alpha-D-glucopyranoside + H2O = 1D-myo-inositol 2-amino-2-deoxy-alpha-D-glucopyranoside + acetate. Its function is as follows. Catalyzes the deacetylation of 1D-myo-inositol 2-acetamido-2-deoxy-alpha-D-glucopyranoside (GlcNAc-Ins) in the mycothiol biosynthesis pathway. The polypeptide is 1D-myo-inositol 2-acetamido-2-deoxy-alpha-D-glucopyranoside deacetylase (Corynebacterium jeikeium (strain K411)).